The following is a 305-amino-acid chain: Ribonucleoside-diphosphate reductase small subunit (305 aa).

Residues Glu64, Glu94, and His97 each contribute to the Fe cation site. Tyr101 is an active-site residue. The helical transmembrane segment at 150–170 threads the bilayer; sequence ILLFLLVEGIFFISSFFSIGL. Glu157, Glu191, and His194 together coordinate Fe cation.

The protein belongs to the ribonucleoside diphosphate reductase small chain family. As to quaternary structure, heterotetramer composed of a homodimer of the large subunit (R1) and a homodimer of the small subunit (R2). Larger multisubunit protein complex are also active, composed of (R1)n(R2)n. Fe cation serves as cofactor.

The protein resides in the host membrane. The catalysed reaction is a 2'-deoxyribonucleoside 5'-diphosphate + [thioredoxin]-disulfide + H2O = a ribonucleoside 5'-diphosphate + [thioredoxin]-dithiol. Its function is as follows. Ribonucleoside-diphosphate reductase holoenzyme provides the precursors necessary for viral DNA synthesis. Allows virus growth in non-dividing cells, as well as reactivation from latency in infected hosts. Catalyzes the biosynthesis of deoxyribonucleotides from the corresponding ribonucleotides. This Saimiri sciureus (Common squirrel monkey) protein is Ribonucleoside-diphosphate reductase small subunit.